A 103-amino-acid polypeptide reads, in one-letter code: uncharacterized protein (103 aa).

This is an uncharacterized protein from Acanthamoeba polyphaga mimivirus (APMV).